A 620-amino-acid chain; its full sequence is Sorbicillinoid biosynthetic cluster transcription factor 1 (620 aa).

Residues 10 to 37 constitute a DNA-binding region (zn(2)-C6 fungal-type); sequence CEECRRRKARCDRVRPQCGICADAGRTC. The segment at 285–308 is disordered; that stretch reads HDDETSPNENSGSCPSVSPSTTQN. Positions 291-308 are enriched in polar residues; that stretch reads PNENSGSCPSVSPSTTQN.

It is found in the nucleus. Its function is as follows. Transcription factor that acts as the main regulator of the gene cluster that mediates the biosynthesis of sorbicillinoids, a diverse group of yellow secondary metabolites that restrict growth of competing pathogenic fungi but not of bacteria. This is Sorbicillinoid biosynthetic cluster transcription factor 1 from Penicillium rubens (strain ATCC 28089 / DSM 1075 / NRRL 1951 / Wisconsin 54-1255) (Penicillium chrysogenum).